Reading from the N-terminus, the 287-residue chain is GTPase Era (287 aa).

The region spanning 6–178 is the Era-type G domain; that stretch reads FSGTSVIIGK…IQNKLKIVPK (173 aa). A G1 region spans residues 14-21; it reads GKPNVGKS. GTP is bound at residue 14-21; sequence GKPNVGKS. Positions 40–44 are G2; that stretch reads HTTQS. The interval 62 to 65 is G3; the sequence is DTPG. Residues 62 to 66 and 124 to 127 contribute to the GTP site; these read DTPGI and NKID. The G4 stretch occupies residues 124–127; it reads NKID. Residues 154–156 are G5; that stretch reads ISG. The KH type-2 domain maps to 207–282; that stretch reads LGDELPYSIQ…SIYLSLKVIK (76 aa).

Belongs to the TRAFAC class TrmE-Era-EngA-EngB-Septin-like GTPase superfamily. Era GTPase family. As to quaternary structure, monomer.

The protein localises to the cytoplasm. The protein resides in the cell membrane. Its function is as follows. An essential GTPase that binds both GDP and GTP, with rapid nucleotide exchange. Plays a role in 16S rRNA processing and 30S ribosomal subunit biogenesis and possibly also in cell cycle regulation and energy metabolism. This is GTPase Era from Buchnera aphidicola subsp. Baizongia pistaciae (strain Bp).